The sequence spans 646 residues: Heat shock 70 kDa protein (646 aa).

Over residues 613–632 the composition is skewed to gly residues; sequence GGAPGGMPGAAPGGFPGGAP. Positions 613–646 are disordered; it reads GGAPGGMPGAAPGGFPGGAPGSNDNEGPTVEEVD.

The protein belongs to the heat shock protein 70 family.

This chain is Heat shock 70 kDa protein (hsps-1), found in Neurospora crassa (strain ATCC 24698 / 74-OR23-1A / CBS 708.71 / DSM 1257 / FGSC 987).